The chain runs to 196 residues: Phosphoheptose isomerase (196 aa).

An SIS domain is found at 36–196 (MAQALQAEGK…LIDQHLFGGA (161 aa)). 51–53 (NGG) contributes to the substrate binding site. Positions 60 and 64 each coordinate Zn(2+). Substrate-binding positions include Glu-64, 93–94 (ND), 119–121 (STS), Ser-124, and Gln-174. Zn(2+) contacts are provided by Gln-174 and His-182.

This sequence belongs to the SIS family. GmhA subfamily. In terms of assembly, homotetramer. Zn(2+) is required as a cofactor.

The protein resides in the cytoplasm. The catalysed reaction is 2 D-sedoheptulose 7-phosphate = D-glycero-alpha-D-manno-heptose 7-phosphate + D-glycero-beta-D-manno-heptose 7-phosphate. The protein operates within carbohydrate biosynthesis; D-glycero-D-manno-heptose 7-phosphate biosynthesis; D-glycero-alpha-D-manno-heptose 7-phosphate and D-glycero-beta-D-manno-heptose 7-phosphate from sedoheptulose 7-phosphate: step 1/1. Catalyzes the isomerization of sedoheptulose 7-phosphate in D-glycero-D-manno-heptose 7-phosphate. The polypeptide is Phosphoheptose isomerase (Alkalilimnicola ehrlichii (strain ATCC BAA-1101 / DSM 17681 / MLHE-1)).